An 89-amino-acid chain; its full sequence is Large ribosomal subunit protein bL27 (89 aa).

Residues 1–20 (MAHKKAGGSSRNGRDSESKR) are disordered.

Belongs to the bacterial ribosomal protein bL27 family.

The protein is Large ribosomal subunit protein bL27 of Bartonella bacilliformis (strain ATCC 35685 / KC583 / Herrer 020/F12,63).